Here is an 83-residue protein sequence, read N- to C-terminus: Small ribosomal subunit protein bS16 (83 aa).

The protein belongs to the bacterial ribosomal protein bS16 family.

This chain is Small ribosomal subunit protein bS16, found in Acinetobacter baumannii (strain AB307-0294).